The primary structure comprises 396 residues: Zinc metalloproteinase nas-19 (396 aa).

A signal peptide spans 1-20 (MVRLIHLIGAIILLFSYAYC). Residues 38–231 (RVKRQFERLG…YKINQYYGCW (194 aa)) form the Peptidase M12A domain. N79 carries N-linked (GlcNAc...) asparagine glycosylation. 4 disulfide bridges follow: C82–C230, C105–C130, C232–C252, and C254–C263. H138 is a Zn(2+) binding site. The active site involves E139. Zn(2+)-binding residues include H142 and H148. Residues 225–264 (NQYYGCWCSKQLECKNGGYTSPSDCSRCNCPKGFFGNLCD) enclose the EGF-like domain. A glycan (N-linked (GlcNAc...) asparagine) is linked at N310.

Zn(2+) serves as cofactor.

It localises to the secreted. Its function is as follows. Metalloprotease. The polypeptide is Zinc metalloproteinase nas-19 (nas-19) (Caenorhabditis elegans).